The chain runs to 179 residues: Large ribosomal subunit protein uL5 (179 aa).

Belongs to the universal ribosomal protein uL5 family. Part of the 50S ribosomal subunit; part of the 5S rRNA/L5/L18/L25 subcomplex. Contacts the 5S rRNA and the P site tRNA. Forms a bridge to the 30S subunit in the 70S ribosome.

This is one of the proteins that bind and probably mediate the attachment of the 5S RNA into the large ribosomal subunit, where it forms part of the central protuberance. In the 70S ribosome it contacts protein S13 of the 30S subunit (bridge B1b), connecting the 2 subunits; this bridge is implicated in subunit movement. Contacts the P site tRNA; the 5S rRNA and some of its associated proteins might help stabilize positioning of ribosome-bound tRNAs. This is Large ribosomal subunit protein uL5 from Bacillus licheniformis (strain ATCC 14580 / DSM 13 / JCM 2505 / CCUG 7422 / NBRC 12200 / NCIMB 9375 / NCTC 10341 / NRRL NRS-1264 / Gibson 46).